Consider the following 71-residue polypeptide: Large ribosomal subunit protein bL31 (71 aa).

Zn(2+)-binding residues include cysteine 16, cysteine 18, cysteine 37, and cysteine 40.

Belongs to the bacterial ribosomal protein bL31 family. Type A subfamily. Part of the 50S ribosomal subunit. It depends on Zn(2+) as a cofactor.

Functionally, binds the 23S rRNA. This is Large ribosomal subunit protein bL31 from Wigglesworthia glossinidia brevipalpis.